The following is a 306-amino-acid chain: Protein FdhE homolog (306 aa).

It belongs to the FdhE family.

Its subcellular location is the cytoplasm. Functionally, necessary for formate dehydrogenase activity. The polypeptide is Protein FdhE homolog (Glaesserella parasuis serovar 5 (strain SH0165) (Haemophilus parasuis)).